A 303-amino-acid chain; its full sequence is Recombination-associated protein RdgC (303 aa).

Belongs to the RdgC family.

Its subcellular location is the cytoplasm. The protein localises to the nucleoid. Functionally, may be involved in recombination. This chain is Recombination-associated protein RdgC, found in Salmonella newport (strain SL254).